The primary structure comprises 810 residues: Interleukin-4 receptor subunit alpha (810 aa).

A signal peptide spans 1 to 25 (MGRLCTKFLTSVGCLILLLVTGSGS). Residues 26–233 (IKVLGEPTCF…NHFQLPLIQR (208 aa)) are Extracellular-facing. Cysteines 34 and 44 form a disulfide. A glycan (N-linked (GlcNAc...) asparagine) is linked at Asn72. An intrachain disulfide couples Cys75 to Cys87. The Fibronectin type-III domain occupies 126 to 224 (APDNLTLHTN…EWSPSITWYN (99 aa)). Residues Asn129, Asn135, and Asn163 are each glycosylated (N-linked (GlcNAc...) asparagine). Ser165 carries the phosphoserine modification. The WSXWS motif signature appears at 213-217 (WSEWS). A helical transmembrane segment spans residues 234-257 (LPLGVTISCLCIPLFCLFCYFSIT). The Cytoplasmic segment spans residues 258–810 (KIKKIWWDQI…PVGALGIAVS (553 aa)). A Box 1 motif motif is present at residues 263 to 271 (WWDQIPTPA). The segment at 441–557 (GSGQASVSWA…ESWEQILHMS (117 aa)) is required for IRS1 activation and IL4-induced cell growth. Positions 460–482 (ATCQVTEQPSHPGPLSGSPAQSA) are disordered. Tyr500 carries the phosphotyrosine modification. Residues 510 to 546 (APNPGELAPEQQQADHLEEEEPPSPADPHSSGPPMQP) form a disordered region. Residues 557–653 (SVLQHGAAAG…SSVPLFTFGL (97 aa)) form a required for IL4-induced gene expression region. A phosphotyrosine mark is found at Tyr575, Tyr603, and Tyr631. The disordered stretch occupies residues 586 to 672 (AAQDPGVPGV…NSDPPKSPPE (87 aa)). The segment covering 635–647 (QNPVPNQSPSSVP) has biased composition (low complexity). The short motif at 707–712 (IVYSSL) is the ITIM motif element. A disordered region spans residues 766–810 (PPEANLMSAPKTPSNLSGEGKGPGHSPVPSQTTEVPVGALGIAVS).

It belongs to the type I cytokine receptor family. Type 4 subfamily. In terms of assembly, the functional IL4 receptor is formed by initial binding of IL4 to IL4R. Subsequent recruitment to the complex of the common gamma chain, in immune cells, creates a type I receptor and, in non-immune cells, of IL13RA1 forms a type II receptor. IL4R can also interact with the IL13/IL13RA1 complex to form a similar type II receptor. Interacts with the SH2-containing phosphatases, PTPN6/SHIP1, PTPN11/SHIP2 and INPP5D/SHIP. Interacts with JAK3. Interacts with PIK3C3. Interacts with JAK1 through a Box 1-containing region; inhibited by SOCS5. Interacts with SOCS5; inhibits IL4 signaling. Interacts with CLM1. Interacts with IL13RA2. Post-translationally, on IL4 binding, phosphorylated on C-terminal tyrosine residues. In terms of processing, soluble IL4R can also be produced by proteolytic cleavage at the cell surface (shedding). In terms of tissue distribution, expressed in both Th1 and Th2 cells.

It localises to the cell membrane. The protein localises to the secreted. Functionally, receptor for both interleukin 4 and interleukin 13. Couples to the JAK1/2/3-STAT6 pathway. The IL4 response is involved in promoting Th2 differentiation. The IL4/IL13 responses are involved in regulating IgE production and, chemokine and mucus production at sites of allergic inflammation. In certain cell types, can signal through activation of insulin receptor substrates, IRS1/IRS2. In Mus musculus (Mouse), this protein is Interleukin-4 receptor subunit alpha (Il4r).